The primary structure comprises 297 residues: Probable endonuclease 4 (297 aa).

Residues histidine 69, histidine 110, glutamate 145, aspartate 179, histidine 182, histidine 214, aspartate 227, histidine 229, and glutamate 259 each coordinate Zn(2+).

The protein belongs to the AP endonuclease 2 family. Requires Zn(2+) as cofactor.

The enzyme catalyses Endonucleolytic cleavage to 5'-phosphooligonucleotide end-products.. In terms of biological role, endonuclease IV plays a role in DNA repair. It cleaves phosphodiester bonds at apurinic or apyrimidinic (AP) sites, generating a 3'-hydroxyl group and a 5'-terminal sugar phosphate. This chain is Probable endonuclease 4, found in Listeria innocua serovar 6a (strain ATCC BAA-680 / CLIP 11262).